The sequence spans 259 residues: Proteasome assembly chaperone 2 (259 aa).

This sequence belongs to the PSMG2 family. Forms a heterodimer with psmg1. In terms of processing, degraded by the proteasome upon completion of 20S proteasome maturation.

It localises to the nucleus. Functionally, chaperone protein which promotes assembly of the 20S proteasome as part of a heterodimer with psmg1. The sequence is that of Proteasome assembly chaperone 2 from Xenopus laevis (African clawed frog).